Here is an 84-residue protein sequence, read N- to C-terminus: ATP synthase subunit c (84 aa).

The next 2 helical transmembrane spans lie at Ile9–Ile29 and Ile54–Ile74.

It belongs to the ATPase C chain family. F-type ATPases have 2 components, F(1) - the catalytic core - and F(0) - the membrane proton channel. F(1) has five subunits: alpha(3), beta(3), gamma(1), delta(1), epsilon(1). F(0) has three main subunits: a(1), b(2) and c(10-14). The alpha and beta chains form an alternating ring which encloses part of the gamma chain. F(1) is attached to F(0) by a central stalk formed by the gamma and epsilon chains, while a peripheral stalk is formed by the delta and b chains.

The protein localises to the cell inner membrane. In terms of biological role, f(1)F(0) ATP synthase produces ATP from ADP in the presence of a proton or sodium gradient. F-type ATPases consist of two structural domains, F(1) containing the extramembraneous catalytic core and F(0) containing the membrane proton channel, linked together by a central stalk and a peripheral stalk. During catalysis, ATP synthesis in the catalytic domain of F(1) is coupled via a rotary mechanism of the central stalk subunits to proton translocation. Its function is as follows. Key component of the F(0) channel; it plays a direct role in translocation across the membrane. A homomeric c-ring of between 10-14 subunits forms the central stalk rotor element with the F(1) delta and epsilon subunits. The protein is ATP synthase subunit c of Pasteurella multocida (strain Pm70).